Here is a 348-residue protein sequence, read N- to C-terminus: Pheromone P-factor receptor (348 aa).

The next 7 membrane-spanning stretches (helical) occupy residues 46–69 (LLTGMTLSAQLALGVLTILMVCLL), 79–103 (VFVFNSASIVAMCLRAILNIVTICS), 125–141 (VFNILILLLAPVIIFTA), 162–180 (IMTVISACLTVLVLAFWIT), 207–225 (YFIAKILFAFSIIFHSGVF), 249–267 (CILVISCQCLIVPATFTII), and 283–301 (CLLIISLPLSSLWASSTAL).

The protein belongs to the G-protein coupled receptor 4 family.

The protein resides in the membrane. In terms of biological role, receptor for the peptide pheromone P-factor, a mating factor of S.pombe. Pheromone signaling is essential for initiation of meiosis in S.pombe; P-factor signaling alone may be sufficient. This Schizosaccharomyces pombe (strain 972 / ATCC 24843) (Fission yeast) protein is Pheromone P-factor receptor (mam2).